The chain runs to 528 residues: J domain-containing protein APJ1 (528 aa).

The 70-residue stretch at 4 to 73 (NTSLYDSLNV…RALYDQYGTT (70 aa)) folds into the J domain. The CR-type zinc-finger motif lies at 193–274 (GKTAKLGLNR…CQGLGFIKER (82 aa)). CXXCXGXG motif repeat units follow at residues 206–213 (CSVCDGHG), 218–225 (CTCKTCKG), 246–253 (CADCGGAG), and 262–269 (CQQCQGLG). A compositionally biased stretch (basic and acidic residues) spans 485 to 499 (NERDSRKRNNRRFDE). The disordered stretch occupies residues 485–528 (NERDSRKRNNRRFDESNINNNNETKRNKYSSPVSGFYDHDINGY).

The protein localises to the cytoplasm. It is found in the nucleus. Functionally, putative chaperone involved in protein folding. Interferes with propagation of [PSI+] prion when overproduced. The sequence is that of J domain-containing protein APJ1 (APJ1) from Saccharomyces cerevisiae (strain ATCC 204508 / S288c) (Baker's yeast).